Here is a 407-residue protein sequence, read N- to C-terminus: Protoasukamycin 4-monooxygenase (407 aa).

Does not interact with AsuE2, suggesting a possible transient interaction between the two enzymes instead of formation of a stable complex. FMN is required as a cofactor. The cofactor is FAD. It depends on riboflavin as a cofactor.

It catalyses the reaction protoasukamycin + NADH + O2 + H(+) = 4-hydroxyprotoasukamycin + NAD(+) + H2O. Its pathway is antibiotic biosynthesis. With respect to regulation, when flavin concentration is low, activity is enhanced by the presence of the NADH-dependent flavin reductase AsuE2. In the presence of abundant flavin, activity of AsuE1 is not affected by AsuE2. Involved in the biosynthesis of the antibiotic asukamycin. Catalyzes the conversion of protoasukamycin to 4-hydroxyprotoasukamycin. Can also convert some protoasukamycin derivatives into their corresponding 4-hydroxyprotoasukamycin derivatives. Can also use NADPH, but catalytic efficiency is 50-fold higher with NADH. In Streptomyces nodosus subsp. asukaensis, this protein is Protoasukamycin 4-monooxygenase.